Here is a 248-residue protein sequence, read N- to C-terminus: Triosephosphate isomerase (248 aa).

Residue 9–11 (NWK) participates in substrate binding. H94 (electrophile) is an active-site residue. E166 serves as the catalytic Proton acceptor. Residues G172, S211, and 232–233 (GG) each bind substrate.

It belongs to the triosephosphate isomerase family. Homodimer.

Its subcellular location is the cytoplasm. The enzyme catalyses D-glyceraldehyde 3-phosphate = dihydroxyacetone phosphate. It functions in the pathway carbohydrate biosynthesis; gluconeogenesis. It participates in carbohydrate degradation; glycolysis; D-glyceraldehyde 3-phosphate from glycerone phosphate: step 1/1. Involved in the gluconeogenesis. Catalyzes stereospecifically the conversion of dihydroxyacetone phosphate (DHAP) to D-glyceraldehyde-3-phosphate (G3P). The sequence is that of Triosephosphate isomerase from Vesicomyosocius okutanii subsp. Calyptogena okutanii (strain HA).